The sequence spans 273 residues: Formamidopyrimidine-DNA glycosylase (273 aa).

Pro2 serves as the catalytic Schiff-base intermediate with DNA. The active-site Proton donor is the Glu3. Residue Lys60 is the Proton donor; for beta-elimination activity of the active site. DNA contacts are provided by His94, Arg113, and Lys154. An FPG-type zinc finger spans residues 239-273 (EAYGRTGEPCRRCGTPIERIVVAQRSTHICPVCQA). Catalysis depends on Arg263, which acts as the Proton donor; for delta-elimination activity.

This sequence belongs to the FPG family. Monomer. Zn(2+) serves as cofactor.

It catalyses the reaction Hydrolysis of DNA containing ring-opened 7-methylguanine residues, releasing 2,6-diamino-4-hydroxy-5-(N-methyl)formamidopyrimidine.. The enzyme catalyses 2'-deoxyribonucleotide-(2'-deoxyribose 5'-phosphate)-2'-deoxyribonucleotide-DNA = a 3'-end 2'-deoxyribonucleotide-(2,3-dehydro-2,3-deoxyribose 5'-phosphate)-DNA + a 5'-end 5'-phospho-2'-deoxyribonucleoside-DNA + H(+). Its function is as follows. Involved in base excision repair of DNA damaged by oxidation or by mutagenic agents. Acts as a DNA glycosylase that recognizes and removes damaged bases. Has a preference for oxidized purines, such as 7,8-dihydro-8-oxoguanine (8-oxoG). Has AP (apurinic/apyrimidinic) lyase activity and introduces nicks in the DNA strand. Cleaves the DNA backbone by beta-delta elimination to generate a single-strand break at the site of the removed base with both 3'- and 5'-phosphates. The sequence is that of Formamidopyrimidine-DNA glycosylase from Herpetosiphon aurantiacus (strain ATCC 23779 / DSM 785 / 114-95).